The following is a 34-amino-acid chain: Photosystem II reaction center protein M (34 aa).

A helical transmembrane segment spans residues 7–27 (GFVATLLFVLVPAIFLIILYI).

The protein belongs to the PsbM family. PSII is composed of 1 copy each of membrane proteins PsbA, PsbB, PsbC, PsbD, PsbE, PsbF, PsbH, PsbI, PsbJ, PsbK, PsbL, PsbM, PsbT, PsbX, PsbY, PsbZ, Psb30/Ycf12, peripheral proteins PsbO, CyanoQ (PsbQ), PsbU, PsbV and a large number of cofactors. It forms dimeric complexes.

Its subcellular location is the cellular thylakoid membrane. In terms of biological role, one of the components of the core complex of photosystem II (PSII). PSII is a light-driven water:plastoquinone oxidoreductase that uses light energy to abstract electrons from H(2)O, generating O(2) and a proton gradient subsequently used for ATP formation. It consists of a core antenna complex that captures photons, and an electron transfer chain that converts photonic excitation into a charge separation. This subunit is found at the monomer-monomer interface. This is Photosystem II reaction center protein M from Synechococcus sp. (strain RCC307).